The following is a 285-amino-acid chain: Ribonuclease Z (285 aa).

Zn(2+) is bound by residues histidine 61, histidine 63, aspartate 65, histidine 66, histidine 152, aspartate 175, and histidine 239. Aspartate 65 functions as the Proton acceptor in the catalytic mechanism.

The protein belongs to the RNase Z family. As to quaternary structure, homodimer. It depends on Zn(2+) as a cofactor.

The enzyme catalyses Endonucleolytic cleavage of RNA, removing extra 3' nucleotides from tRNA precursor, generating 3' termini of tRNAs. A 3'-hydroxy group is left at the tRNA terminus and a 5'-phosphoryl group is left at the trailer molecule.. Functionally, zinc phosphodiesterase, which displays some tRNA 3'-processing endonuclease activity. Probably involved in tRNA maturation, by removing a 3'-trailer from precursor tRNA. This chain is Ribonuclease Z, found in Mycobacterium sp. (strain JLS).